A 70-amino-acid chain; its full sequence is DNA gyrase inhibitor YacG (70 aa).

Residues cysteine 9, cysteine 12, cysteine 28, and cysteine 32 each contribute to the Zn(2+) site. A disordered region spans residues 43-70 (ESRKIPGSSIDPESIVTSNNKQDNVDEQ).

It belongs to the DNA gyrase inhibitor YacG family. Interacts with GyrB. The cofactor is Zn(2+).

Functionally, inhibits all the catalytic activities of DNA gyrase by preventing its interaction with DNA. Acts by binding directly to the C-terminal domain of GyrB, which probably disrupts DNA binding by the gyrase. This chain is DNA gyrase inhibitor YacG, found in Legionella pneumophila (strain Lens).